An 811-amino-acid chain; its full sequence is Protein VAC14 homolog (811 aa).

7 HEAT repeats span residues 81–119 (DSYM…VAKG), 122–160 (FRYF…IVMQ), 240–278 (ISYL…EIQK), 334–372 (QIDY…IAPK), 375–412 (LLQI…LVSK), 431–469 (SVDF…RTGG), and 472–510 (INMH…SHKS). Low complexity predominate over residues 775–785 (TSASGITTTAS). Residues 775 to 811 (TSASGITTTASNSRDSFITRLPPTAALSTGARKKPKQ) are disordered.

It belongs to the VAC14 family. As to quaternary structure, component of the PI(3,5)P2 regulatory complex, composed of ATG18, FIG4, FAB1, VAC14 and VAC7. VAC14 nucleates the assembly of the complex and serves as a scaffold.

Its subcellular location is the cytoplasm. The protein localises to the vacuole membrane. Functionally, the PI(3,5)P2 regulatory complex regulates both the synthesis and turnover of phosphatidylinositol 3,5-bisphosphate (PtdIns(3,5)P2). Regulates the synthesis of PtdIns(3,5)P2 by positive activation of FAB1 and by controlling FIG4 localization. The chain is Protein VAC14 homolog from Schizosaccharomyces pombe (strain 972 / ATCC 24843) (Fission yeast).